Here is a 234-residue protein sequence, read N- to C-terminus: MRLVQLSRHSIAFPSPEGALREPNGLLALGGDLSPARLLMAYQRGIFPWFSPGDPILWWSPDPRAILQPETLHISRSMKRFHKRSPYRVTLNYAFGQVIEGCANDRDEGTWITRDVVEAYHRLHELGHAHSIEVWRHNALVGGMYGVSQGTLFCGESMFSRQENASKTALLVFCAEFIRQGGKLIDCQVLNSHTASLGAVEIPRRQYLEHLGSLRQQRLPGHFWVPRTLFSPQA.

The protein belongs to the L/F-transferase family.

Its subcellular location is the cytoplasm. The catalysed reaction is N-terminal L-lysyl-[protein] + L-leucyl-tRNA(Leu) = N-terminal L-leucyl-L-lysyl-[protein] + tRNA(Leu) + H(+). The enzyme catalyses N-terminal L-arginyl-[protein] + L-leucyl-tRNA(Leu) = N-terminal L-leucyl-L-arginyl-[protein] + tRNA(Leu) + H(+). It catalyses the reaction L-phenylalanyl-tRNA(Phe) + an N-terminal L-alpha-aminoacyl-[protein] = an N-terminal L-phenylalanyl-L-alpha-aminoacyl-[protein] + tRNA(Phe). Functions in the N-end rule pathway of protein degradation where it conjugates Leu, Phe and, less efficiently, Met from aminoacyl-tRNAs to the N-termini of proteins containing an N-terminal arginine or lysine. The sequence is that of Leucyl/phenylalanyl-tRNA--protein transferase from Citrobacter koseri (strain ATCC BAA-895 / CDC 4225-83 / SGSC4696).